The primary structure comprises 336 residues: Adenosine deaminase (336 aa).

Histidine 15 and histidine 17 together coordinate Zn(2+). Substrate is bound by residues histidine 17, aspartate 19, and glycine 172. Residue histidine 199 coordinates Zn(2+). Glutamate 202 (proton donor) is an active-site residue. Residue aspartate 279 coordinates Zn(2+).

Belongs to the metallo-dependent hydrolases superfamily. Adenosine and AMP deaminases family. Adenosine deaminase subfamily. Zn(2+) is required as a cofactor.

It catalyses the reaction adenosine + H2O + H(+) = inosine + NH4(+). The enzyme catalyses 2'-deoxyadenosine + H2O + H(+) = 2'-deoxyinosine + NH4(+). Catalyzes the hydrolytic deamination of adenosine and 2-deoxyadenosine. In Streptococcus thermophilus (strain ATCC BAA-491 / LMD-9), this protein is Adenosine deaminase.